Reading from the N-terminus, the 435-residue chain is S-phase entry cyclin-5 (435 aa).

Disordered stretches follow at residues lysine 36 to serine 70 and asparagine 104 to serine 126. Positions lysine 41–aspartate 52 are enriched in low complexity. Residues glutamate 110–alanine 124 show a composition bias toward acidic residues.

The protein belongs to the cyclin family. Cyclin AB subfamily.

In terms of biological role, required for efficient progression through S phase and possibly for the normal progression through meiosis. Interacts with CDC28. The protein is S-phase entry cyclin-5 (CLB5) of Saccharomyces cerevisiae (strain ATCC 204508 / S288c) (Baker's yeast).